Reading from the N-terminus, the 250-residue chain is Adapter protein MecA (250 aa).

Belongs to the MecA family. As to quaternary structure, homodimer.

Enables the recognition and targeting of unfolded and aggregated proteins to the ClpC protease or to other proteins involved in proteolysis. The protein is Adapter protein MecA of Streptococcus sanguinis (strain SK36).